A 215-amino-acid chain; its full sequence is WAT1-related protein At3g28060 (215 aa).

The next 5 membrane-spanning stretches (helical) occupy residues 48–68 (IIIG…AVAY), 82–102 (FALA…VSLF), 117–137 (IMLI…VVES), 146–166 (VFLA…GAIF), and 176–196 (VIGG…FHIA). One can recognise an EamA domain in the interval 65 to 186 (AVAYIVQTHI…IGGTLISIGF (122 aa)).

The protein belongs to the drug/metabolite transporter (DMT) superfamily. Plant drug/metabolite exporter (P-DME) (TC 2.A.7.4) family.

The protein resides in the membrane. This chain is WAT1-related protein At3g28060, found in Arabidopsis thaliana (Mouse-ear cress).